The following is a 234-amino-acid chain: Acetylxylan esterase 2 (234 aa).

Positions 1-17 (MHSKFFAASLLGLGAAA) are cleaved as a signal peptide. Residues 18–27 (IPLEGVMEKR) constitute a propeptide that is removed on maturation. Intrachain disulfides connect Cys-29–Cys-106 and Cys-73–Cys-79. Residue Ser-117 is part of the active site. 3 disulfides stabilise this stretch: Cys-128–Cys-188, Cys-174–Cys-206, and Cys-198–Cys-205. The active site involves Asp-202. N-linked (GlcNAc...) asparagine glycosylation occurs at Asn-207. The active site involves His-214.

It belongs to the cutinase family. Acetylxylan esterase subfamily. In terms of assembly, monomer.

The protein localises to the secreted. It carries out the reaction Deacetylation of xylans and xylo-oligosaccharides.. It functions in the pathway glycan degradation; xylan degradation. Functionally, degrades acetylated xylans by cleaving acetyl side groups from the hetero-xylan backbone. In Talaromyces purpureogenus (Soft rot fungus), this protein is Acetylxylan esterase 2 (axe-2).